Here is a 249-residue protein sequence, read N- to C-terminus: Probable transcriptional regulatory protein aq_1575 (249 aa).

This sequence belongs to the TACO1 family.

The protein resides in the cytoplasm. This is Probable transcriptional regulatory protein aq_1575 from Aquifex aeolicus (strain VF5).